Consider the following 314-residue polypeptide: Acetyl-coenzyme A carboxylase carboxyl transferase subunit beta (314 aa).

The CoA carboxyltransferase N-terminal domain maps to Val-25–Phe-294. 4 residues coordinate Zn(2+): Cys-29, Cys-32, Cys-48, and Cys-51. Residues Cys-29 to Cys-51 form a C4-type zinc finger.

Belongs to the AccD/PCCB family. In terms of assembly, acetyl-CoA carboxylase is a heterohexamer composed of biotin carboxyl carrier protein (AccB), biotin carboxylase (AccC) and two subunits each of ACCase subunit alpha (AccA) and ACCase subunit beta (AccD). Requires Zn(2+) as cofactor.

It is found in the cytoplasm. The enzyme catalyses N(6)-carboxybiotinyl-L-lysyl-[protein] + acetyl-CoA = N(6)-biotinyl-L-lysyl-[protein] + malonyl-CoA. It participates in lipid metabolism; malonyl-CoA biosynthesis; malonyl-CoA from acetyl-CoA: step 1/1. Functionally, component of the acetyl coenzyme A carboxylase (ACC) complex. Biotin carboxylase (BC) catalyzes the carboxylation of biotin on its carrier protein (BCCP) and then the CO(2) group is transferred by the transcarboxylase to acetyl-CoA to form malonyl-CoA. This Photorhabdus laumondii subsp. laumondii (strain DSM 15139 / CIP 105565 / TT01) (Photorhabdus luminescens subsp. laumondii) protein is Acetyl-coenzyme A carboxylase carboxyl transferase subunit beta.